We begin with the raw amino-acid sequence, 255 residues long: MKFLLIASNKDLASKNIANHIKEYFDVFETDKELLSLTAEDLEYADYYIFLSKHKSIANKPSLTVHTPGNLTEDNTFGGNPKEVCPCDAVLNTLLLKNIYKNYKTYYEDGKIGEFDVSFEVVHHSPTGLKAPTVFVEIGSSEKEWILKEAGEIIAKSVLETIDAMKSKNYDKKVRAIGFGGGHYAPKFTKLALEDKYYFGYLVPKYASVSEDVLNQLISKMEVDKALIDWKGCRGDDKRRYIEFFENNGIEWERV.

Belongs to the DtdA deacylase family. As to quaternary structure, monomer. It depends on Zn(2+) as a cofactor.

The catalysed reaction is a D-aminoacyl-tRNA + H2O = a tRNA + a D-alpha-amino acid + H(+). It carries out the reaction glycyl-tRNA(Ala) + H2O = tRNA(Ala) + glycine + H(+). Its function is as follows. D-aminoacyl-tRNA deacylase with broad substrate specificity. By recycling D-aminoacyl-tRNA to D-amino acids and free tRNA molecules, this enzyme counteracts the toxicity associated with the formation of D-aminoacyl-tRNA entities in vivo. The protein is D-aminoacyl-tRNA deacylase of Methanocaldococcus jannaschii (strain ATCC 43067 / DSM 2661 / JAL-1 / JCM 10045 / NBRC 100440) (Methanococcus jannaschii).